Here is a 293-residue protein sequence, read N- to C-terminus: Nucleotide-binding protein BCQ_4976 (293 aa).

ATP is bound at residue 14-21; sequence GMSGAGKT. 65 to 68 contacts GTP; sequence DLRG.

Belongs to the RapZ-like family.

Its function is as follows. Displays ATPase and GTPase activities. The chain is Nucleotide-binding protein BCQ_4976 from Bacillus cereus (strain Q1).